The primary structure comprises 338 residues: MSFIDEVKINVKSGDGGAGCVSFRREKFIPLGGPDGGDGGKGGDVIVKVSSHLSTLLDLRQHPHQKAGRGKNGMGSDRHGANGHTLEILVPQGTVIKDAETGEILADLAEPDSSMVLLKGGRGGQGNARFKTATHKAPKFAQPGEPGEERWIRMELKLMADVGLLGMPSVGKSSLIAKISAARPKIAEYHFTTLKPSLGVVQYKNYRSFVMADIPGLIEGASEGAGLGHRFLKHLERTGQLLHLLDLSWMPDRDPIAEYEAINRELALFNPELADKRQTVVVNKIDLPHVRENLKEILPYFEERGIKVFPISAATGEGIPELLDDIAFNLWGEPEETW.

An Obg domain is found at 1–159 (MSFIDEVKIN…RWIRMELKLM (159 aa)). A disordered region spans residues 58–79 (DLRQHPHQKAGRGKNGMGSDRH). An OBG-type G domain is found at 160–331 (ADVGLLGMPS…LLDDIAFNLW (172 aa)). Residues 166–173 (GMPSVGKS), 191–195 (FTTLK), 213–216 (DIPG), 283–286 (NKID), and 312–314 (SAA) each bind GTP. Residues serine 173 and threonine 193 each contribute to the Mg(2+) site.

The protein belongs to the TRAFAC class OBG-HflX-like GTPase superfamily. OBG GTPase family. Monomer. It depends on Mg(2+) as a cofactor.

It is found in the cytoplasm. An essential GTPase which binds GTP, GDP and possibly (p)ppGpp with moderate affinity, with high nucleotide exchange rates and a fairly low GTP hydrolysis rate. Plays a role in control of the cell cycle, stress response, ribosome biogenesis and in those bacteria that undergo differentiation, in morphogenesis control. The protein is GTPase Obg of Citrifermentans bemidjiense (strain ATCC BAA-1014 / DSM 16622 / JCM 12645 / Bem) (Geobacter bemidjiensis).